A 145-amino-acid chain; its full sequence is Putative pre-16S rRNA nuclease (145 aa).

The protein belongs to the YqgF nuclease family.

The protein localises to the cytoplasm. Functionally, could be a nuclease involved in processing of the 5'-end of pre-16S rRNA. The sequence is that of Putative pre-16S rRNA nuclease from Levilactobacillus brevis (strain ATCC 367 / BCRC 12310 / CIP 105137 / JCM 1170 / LMG 11437 / NCIMB 947 / NCTC 947) (Lactobacillus brevis).